Consider the following 240-residue polypeptide: Serine protease SplB (240 aa).

Residues 1-36 (MNKNVVIKSLATLTILTSVAGIGTTLVEEVQQTAKA) form the signal peptide. Residues H75, D113, and S193 each act as charge relay system in the active site.

Belongs to the peptidase S1B family.

It localises to the secreted. In terms of biological role, serine protease that cleaves specifically after the sequence Trp-Glu-Leu-Gln. In Staphylococcus aureus (strain bovine RF122 / ET3-1), this protein is Serine protease SplB (splB).